Reading from the N-terminus, the 1130-residue chain is Roquin-1 (1130 aa).

The Zn(2+) site is built by C14, C17, C33, H35, C38, C50, and D53. The segment at 14–54 adopts an RING-type; degenerate zinc-finger fold; it reads CPICTQTFDETIRKPISLGCGHTVCKMCLNKLHRKACPFDQ. Positions 128 to 176 are HEPN-N; sequence VLSRPMQRKLVTLVHCQLVEEEGRIRAMRAARSLGERTVTELILQHQNP. The ROQ stretch occupies residues 177–326; the sequence is QQLSSNLWAA…MQSIIDKLQT (150 aa). An HEPN-C region spans residues 327-399; that stretch reads PASFAQSVQE…GLVDYIQNHS (73 aa). The C3H1-type zinc finger occupies 413-441; the sequence is KYKTYMCRDMKQRGGCPRGASCTFAHSQE. Position 462 is a phosphoserine (S462). Disordered regions lie at residues 493–567 and 722–750; these read LPNG…DLPP and PHPA…PSLD. Residues 497 to 506 show a composition bias toward polar residues; sequence IASSGSTVTQ. S531 and S535 each carry phosphoserine. Composition is skewed to pro residues over residues 553–567 and 732–746; these read NPHP…DLPP and PRDP…PQPH. Residues S861, S1107, and S1110 each carry the phosphoserine modification. A disordered region spans residues 1100–1130; the sequence is KTSSLNLSEDSEGGGDNNDSQRSGVVSNSAP. Over residues 1116 to 1130 the composition is skewed to polar residues; sequence NNDSQRSGVVSNSAP.

In terms of assembly, interacts with DDX6 and EDC4. Interacts with CCR4-NOT deadenylase complex. Interacts with RC3H1; the interaction is RNA independent. In terms of processing, proteolytically cleaved after Arg-510 and Arg-579 by MALT1 in activated CD4(+) T cells; cleavage at Arg-510 and Arg-579 is critical for promoting RC3H1 degradation in response to T-cell receptor (TCR) stimulation, and hence is necessary for prolonging the stability of a set of mRNAs controlling Th17 cell differentiation. Widely expressed, with highest levels in lymph node and thymus and slightly lesser amounts in brain, lung, and spleen (at protein level). Very weak expression in heart, muscle, and kidney (at protein level). Expressed in CD4(+) helper T-cells (at protein level).

The protein localises to the cytoplasm. Its subcellular location is the P-body. The protein resides in the cytoplasmic granule. It carries out the reaction S-ubiquitinyl-[E2 ubiquitin-conjugating enzyme]-L-cysteine + [acceptor protein]-L-lysine = [E2 ubiquitin-conjugating enzyme]-L-cysteine + N(6)-ubiquitinyl-[acceptor protein]-L-lysine.. The protein operates within protein modification; protein ubiquitination. Functionally, post-transcriptional repressor of mRNAs containing a conserved stem loop motif, called constitutive decay element (CDE), which is often located in the 3'-UTR, as in HMGXB3, ICOS, IER3, NFKBID, NFKBIZ, PPP1R10, TNF, TNFRSF4 and in many more mRNAs. Cleaves translationally inactive mRNAs harboring a stem-loop (SL), often located in their 3'-UTRs, during the early phase of inflammation in a helicase UPF1-independent manner. Binds to CDE and promotes mRNA deadenylation and degradation. This process does not involve miRNAs. In follicular helper T (Tfh) cells, represses of ICOS and TNFRSF4/Ox40 expression, thus preventing spontaneous Tfh cell differentiation, germinal center B-cell differentiation in the absence of immunization and autoimmunity. In resting or LPS-stimulated macrophages, controls inflammation by suppressing TNF expression. Also recognizes CDE in its own mRNA and in that of paralogous RC3H2, possibly leading to feedback loop regulation. Inhibits cooperatively with ZC3H12A the differentiation of helper T cells Th17 in lungs. They repress target mRNA encoding the Th17 cell-promoting factors IL6, ICOS, REL, IRF4, NFKBID and NFKBIZ. The cooperation requires RNA-binding by RC3H1 and the nuclease activity of ZC3H12A. Recognizes and binds mRNAs containing a hexaloop stem-loop motif, called alternative decay element (ADE). Together with ZC3H12A, destabilizes TNFRSF4/OX40 mRNA by binding to the conserved stem loop structure in its 3'UTR. Able to interact with double-stranded RNA. miRNA-binding protein that regulates microRNA homeostasis. Enhances DICER-mediated processing of pre-MIR146a but reduces mature MIR146a levels through an increase of 3' end uridylation. Both inhibits ICOS mRNA expression and they may act together to exert the suppression. Acts as a ubiquitin E3 ligase. Pairs with E2 enzymes UBE2A, UBE2B, UBE2D2, UBE2F, UBE2G1, UBE2G2 and UBE2L3 and produces polyubiquitin chains. Shows the strongest activity when paired with UBE2N:UBE2V1 or UBE2N:UBE2V2 E2 complexes and generate both short and long polyubiquitin chains. The polypeptide is Roquin-1 (Mus musculus (Mouse)).